Consider the following 398-residue polypeptide: Dual-specificity RNA methyltransferase RlmN (398 aa).

Residue Glu119 is the Proton acceptor of the active site. The Radical SAM core domain occupies 125 to 364; sequence EGDRATLCVS…TIVRKTRGDD (240 aa). A disulfide bond links Cys132 and Cys369. Residues Cys139, Cys143, and Cys146 each coordinate [4Fe-4S] cluster. Residues 193 to 194, Ser225, 247 to 249, and Asn326 contribute to the S-adenosyl-L-methionine site; these read GE and SLH. Cys369 functions as the S-methylcysteine intermediate in the catalytic mechanism.

It belongs to the radical SAM superfamily. RlmN family. [4Fe-4S] cluster serves as cofactor.

It is found in the cytoplasm. It carries out the reaction adenosine(2503) in 23S rRNA + 2 reduced [2Fe-2S]-[ferredoxin] + 2 S-adenosyl-L-methionine = 2-methyladenosine(2503) in 23S rRNA + 5'-deoxyadenosine + L-methionine + 2 oxidized [2Fe-2S]-[ferredoxin] + S-adenosyl-L-homocysteine. The enzyme catalyses adenosine(37) in tRNA + 2 reduced [2Fe-2S]-[ferredoxin] + 2 S-adenosyl-L-methionine = 2-methyladenosine(37) in tRNA + 5'-deoxyadenosine + L-methionine + 2 oxidized [2Fe-2S]-[ferredoxin] + S-adenosyl-L-homocysteine. Specifically methylates position 2 of adenine 2503 in 23S rRNA and position 2 of adenine 37 in tRNAs. m2A2503 modification seems to play a crucial role in the proofreading step occurring at the peptidyl transferase center and thus would serve to optimize ribosomal fidelity. The polypeptide is Dual-specificity RNA methyltransferase RlmN (Yersinia enterocolitica serotype O:8 / biotype 1B (strain NCTC 13174 / 8081)).